A 394-amino-acid polypeptide reads, in one-letter code: GDP-mannose transporter (394 aa).

Over 1–55 the chain is Cytoplasmic; that stretch reads MADKKNEDFVVRMPDNGTVEKEPFLARSPPARARTGSGGGFGDSFSLARVANNPP. The chain crosses the membrane as a helical span at residues 56–76; the sequence is AAILAYCLSSISMTVVNKYVV. Topologically, residues 77-80 are lumenal; sequence SGSE. Residues 81–101 form a helical membrane-spanning segment; it reads WNLNFFYLAVQAIVCIIAILF. The Cytoplasmic portion of the chain corresponds to 102–121; the sequence is CKQIGIITNLAPFDNVKAKK. A helical membrane pass occupies residues 122 to 144; the sequence is WFPVSLLLVGMIYTSTKALQFLS. At 145–149 the chain is on the lumenal side; that stretch reads VPVYT. A helical membrane pass occupies residues 150–167; the sequence is IFKNLTIIAIAYGEVLWF. Topologically, residues 168-173 are cytoplasmic; sequence GGSVSP. Residues 174-198 form a helical membrane-spanning segment; sequence LALVSFGLMVLSSVVAAWADIQSAI. Residues 199 to 213 are Lumenal-facing; the sequence is HGGSHPSEASTAIST. A helical membrane pass occupies residues 214–234; it reads LNAGYAWMGMNVFCSAAYLLG. The Cytoplasmic portion of the chain corresponds to 235–246; the sequence is MRKVIHKMNFKD. A helical transmembrane segment spans residues 247 to 267; that stretch reads WDSMFYNNLLTIPVLIVCSLI. At 268 to 287 the chain is on the lumenal side; the sequence is AEDWSAANLARNFPIESRNA. A helical membrane pass occupies residues 288–308; the sequence is LFIGMIYSGLGAIFISYCSAW. At 309–316 the chain is on the cytoplasmic side; that stretch reads CIRVTTST. The chain crosses the membrane as a helical span at residues 317–339; it reads TYSMVGALNKLPIAISGLVFFSA. Over 340–342 the chain is Lumenal; the sequence is PVT. A helical transmembrane segment spans residues 343–362; the sequence is FGSVSAIVIGFISGIVYAWA. The Cytoplasmic segment spans residues 363 to 394; that stretch reads KARQSSQAKSALPTQQPVMSASSQSNKDASNS. The disordered stretch occupies residues 371-394; that stretch reads KSALPTQQPVMSASSQSNKDASNS. A compositionally biased stretch (polar residues) spans 374-394; it reads LPTQQPVMSASSQSNKDASNS.

The protein belongs to the TPT transporter family. SLC35D subfamily. As to quaternary structure, homooligomer.

Its subcellular location is the golgi apparatus membrane. The protein resides in the cytoplasmic vesicle membrane. It localises to the endoplasmic reticulum membrane. Involved in the import of GDP-mannose from the cytoplasm into the Golgi lumen. This is GDP-mannose transporter (VRG4) from Pyricularia oryzae (strain 70-15 / ATCC MYA-4617 / FGSC 8958) (Rice blast fungus).